Consider the following 205-residue polypeptide: MSRYTGSIFRKSRRLGFSILETGKEFAKGKQRRYAPGLHGLRRSKPSDYGVHLREKQKVRFMYGLSEKQFRNTYRKATKKTGIAGTLFLQALESRLDNSVYRAGFAETRRQARQLVNHGHFLVNNKKVDIPSFQLKQGDIFELTTRKDGKIRKNQQILTSLETRTPAAWLEVDKDNFKVVFNRMPERSELNQEIKESLIVEFYSK.

In terms of domain architecture, S4 RNA-binding spans 94-154; sequence SRLDNSVYRA…TRKDGKIRKN (61 aa).

This sequence belongs to the universal ribosomal protein uS4 family. Part of the 30S ribosomal subunit. Contacts protein S5. The interaction surface between S4 and S5 is involved in control of translational fidelity.

Functionally, one of the primary rRNA binding proteins, it binds directly to 16S rRNA where it nucleates assembly of the body of the 30S subunit. With S5 and S12 plays an important role in translational accuracy. This chain is Small ribosomal subunit protein uS4, found in Mesomycoplasma hyopneumoniae (strain 232) (Mycoplasma hyopneumoniae).